Consider the following 819-residue polypeptide: MTSASQILVWGLLAASGAQAQNYGGGSSRSDDAFSYVQPKNTTILGAYGHSPAVYPSPNTTGSGGWETALAQAQDFVAQLTLEEKANMVTGQPGPCVGNIIAIPRLNFSGLCLQDGPLAIRVTDMASVFSAGVTAAASWDRKILYERGYAMGQEFKAKGAHVALGPVAGPLGRSAYSGRNWEGFAADPYLTGVAMEETIQGYQDAGVQACPKHFIGNEQETMRNPTFNDSAPLGTVIQEAVSSNIDDRTMHELYLWPFANAVHAKAASIMCSYQRINGSYGCENSKTLNGLLKGELGFQGYVMSDWGATHSGVAGIKSGQDMDMPGGLGAYGQTFINRSFFGGNVTAAVNNGTLEESRIDDMILRIMTPYFWLGQDQDYPTVDPSTADYNTFSPRNTWYQDFNLTGERSRDVRGNHAALIRKQAAEATVLLKNKNNALPLKAPKTLAVFGNDASDITNGPYNDATYEYGTLAAGGGSGTGRFTYLVSPLTAINARAQKDNTSLVQFWLNNTQIATSDVQADLLRVPTPPTACLVFVKTWAEEGADREHLRLDYNGTEVVEAVAAACNNTIVVTHSSGINELPFANHPNVTAILAAHFPGQESGNSIVDVLYGDVNPSGRLPYTIARNGSDYNAPPTTAVTTSGREDWQSWFDEKLEIDYRYFDAHNIPVLYEFGFGLSYTTFNISDIYATRVVDSITSAPEDRAIQPGGNPELWETIYNVTVSVTNTGDVEGATVPQLYVTFPDSTPEGTPPKQLRGFDKVSLQPGESTKVIFELMRRDLSYWDTVSQQWLIPEGDFTIRVGFSSRNLKEVTTITPVSE.

The signal sequence occupies residues methionine 1–alanine 20. N-linked (GlcNAc...) asparagine glycosylation is found at asparagine 41, asparagine 59, asparagine 107, asparagine 228, and asparagine 277. Aspartate 305 is a catalytic residue. 12 N-linked (GlcNAc...) asparagine glycosylation sites follow: asparagine 337, asparagine 344, asparagine 351, asparagine 403, asparagine 500, asparagine 509, asparagine 554, asparagine 567, asparagine 588, asparagine 627, asparagine 683, and asparagine 719.

This sequence belongs to the glycosyl hydrolase 3 family.

The protein resides in the secreted. It carries out the reaction Hydrolysis of terminal, non-reducing beta-D-glucosyl residues with release of beta-D-glucose.. The protein operates within glycan metabolism; cellulose degradation. Beta-glucosidases are one of a number of cellulolytic enzymes involved in the degradation of cellulosic biomass. Catalyzes the last step releasing glucose from the inhibitory cellobiose. This Emericella nidulans (strain FGSC A4 / ATCC 38163 / CBS 112.46 / NRRL 194 / M139) (Aspergillus nidulans) protein is Probable beta-glucosidase G (bglG).